Here is a 154-residue protein sequence, read N- to C-terminus: Endoribonuclease YbeY (154 aa).

3 residues coordinate Zn(2+): His-113, His-117, and His-123.

Belongs to the endoribonuclease YbeY family. The cofactor is Zn(2+).

The protein resides in the cytoplasm. Functionally, single strand-specific metallo-endoribonuclease involved in late-stage 70S ribosome quality control and in maturation of the 3' terminus of the 16S rRNA. The protein is Endoribonuclease YbeY of Vibrio campbellii (strain ATCC BAA-1116).